The sequence spans 1387 residues: Kinesin-like protein KIF15-B (1387 aa).

Residues 26 to 364 form the Kinesin motor domain; it reads AIKVFVRIRP…LQFAQRAKLI (339 aa). Residue 110–117 participates in ATP binding; sequence GQTGSGKT. Positions 369 to 1383 form a coiled coil; sequence VVNEDTQGNV…NLFLKETKKC (1015 aa). The necessary for its targeting to microtubule minus ends stretch occupies residues 1138 to 1387; the sequence is NSPVVLAQTP…KETKKCEHCD (250 aa).

The protein belongs to the TRAFAC class myosin-kinesin ATPase superfamily. Kinesin family. KLP2 subfamily. As to quaternary structure, homodimer. Dimerization is required for targeting to microtubule minus ends. Found in a complex with tpx2 and microtubules. Its association with microtubules and targeting to microtubule minus ends requires tpx2. In terms of tissue distribution, strongly expressed in testis and weakly in lung (at protein level).

The protein resides in the cytoplasm. Its subcellular location is the cytoskeleton. It localises to the microtubule organizing center. The protein localises to the centrosome. It is found in the spindle. The protein resides in the spindle pole. In terms of biological role, plus-end directed kinesin-like motor enzyme involved in mitotic spindle assembly. Required for centrosome separation and maintenance of spindle bipolarity during mitosis. The polypeptide is Kinesin-like protein KIF15-B (kif15-b) (Xenopus laevis (African clawed frog)).